Reading from the N-terminus, the 304-residue chain is MMKQRTIATPVKTVGIGLHSGRKVTISIKPAPVNSGVQFIRVDTPERSVVPATALAVCDTRLASVIQKDGVRVSTVEHLLSACAGLGLDNLLIELDGEEVPIMDGSAASFLFLIESAGIAEQEVPRQFVVIKKPVEVREGDKLARLEPFFGFKLDFTIDFKHPAVDKTGQRFVVDFSEHAYRSEIGRARTFGFAHEVEALREMGLARGGSLDNAIVLDEHRILNNEELRYEDEFVRHKILDAIGDLYLIGHPIVGAYVAEKSGHALNNALLRKLLEDPSSYEISTFAENKAPGAYSQESQPLFF.

Zn(2+) contacts are provided by His-78, His-237, and Asp-241. His-264 acts as the Proton donor in catalysis.

It belongs to the LpxC family. It depends on Zn(2+) as a cofactor.

It catalyses the reaction a UDP-3-O-[(3R)-3-hydroxyacyl]-N-acetyl-alpha-D-glucosamine + H2O = a UDP-3-O-[(3R)-3-hydroxyacyl]-alpha-D-glucosamine + acetate. Its pathway is glycolipid biosynthesis; lipid IV(A) biosynthesis; lipid IV(A) from (3R)-3-hydroxytetradecanoyl-[acyl-carrier-protein] and UDP-N-acetyl-alpha-D-glucosamine: step 2/6. Its function is as follows. Catalyzes the hydrolysis of UDP-3-O-myristoyl-N-acetylglucosamine to form UDP-3-O-myristoylglucosamine and acetate, the committed step in lipid A biosynthesis. The polypeptide is UDP-3-O-acyl-N-acetylglucosamine deacetylase (Polynucleobacter necessarius subsp. necessarius (strain STIR1)).